A 228-amino-acid chain; its full sequence is MGVTGMTYMFTMVFSLIVLILSSSTVGYDYFQFTQQYQPAVCNSNPTPCNDPTDKLFTVHGLWPSNRNGPDPEKCKTTALNSQKIGNMTAQLEIIWPNVLNRSDHVGFWEKEWIKHGTCGYPTIKDDMHYLQTVIRMYITQKQNVSAILSKAAIQPNGTNRPLVDIENAIRRGTNNTKPKFKCQKNTRTTTELVEVTLCSDRDLKKFINCPHGPPQGSRFSCPSSVQY.

A signal peptide spans 1–27 (MGVTGMTYMFTMVFSLIVLILSSSTVG). Q36 is a binding site for RNA. A disulfide bridge connects residues C42 and C49. Residue H60 coordinates RNA. H60 acts as the Proton donor in catalysis. C75 and C119 are disulfide-bonded. N87 carries N-linked (GlcNAc...) asparagine glycosylation. 98-99 (NV) is a binding site for RNA. The N-linked (GlcNAc...) asparagine glycan is linked to N101. RNA is bound by residues F108, 111 to 112 (KE), and 115 to 116 (KH). The active site involves E112. The Proton acceptor role is filled by H116. N144, N157, and N175 each carry an N-linked (GlcNAc...) asparagine glycan. Cystine bridges form between C183/C222 and C199/C210.

Belongs to the RNase T2 family. In terms of processing, N-linked core structure at Asn-87 and Asn-101 contains xylose and fucose or consists of disaccharide (GlcNAc-GlcNAc). N-linked core structure at Asn-144 contains xylose.

The enzyme catalyses a ribonucleotidyl-ribonucleotide-RNA + H2O = a 3'-end 3'-phospho-ribonucleotide-RNA + a 5'-end dephospho-ribonucleoside-RNA + H(+). Its function is as follows. Self-incompatibility (SI) is the inherited ability of a flowering plant to prevent self-fertilization by discriminating between self and non-self pollen during pollination. In many species, self-incompatibility is controlled by the single, multiallelic locus S. In Pyrus pyrifolia (Chinese pear), this protein is Ribonuclease S-1.